Consider the following 137-residue polypeptide: Chaperone protein YscB (137 aa).

In terms of assembly, interacts with SycN to form a complex which specifically binds to YopN.

The protein resides in the cytoplasm. It localises to the cell inner membrane. Functionally, functions as a specific chaperone for YopN. It could facilitate the secretion and the subsequent translocation of YopN. This Yersinia enterocolitica protein is Chaperone protein YscB (yscB).